A 553-amino-acid polypeptide reads, in one-letter code: Membrane protein insertase YidC (553 aa).

Residues 6 to 26 (LIALVLSLLVLVFWEMYFGLF) form a helical membrane-spanning segment. A disordered region spans residues 34–59 (NKTEQAAPTTTQPATPQTVPPQAATP). The span at 38-59 (QAAPTTTQPATPQTVPPQAATP) shows a compositional bias: low complexity. A run of 5 helical transmembrane segments spans residues 331-351 (LASAVDYGWFTFIAKPLVYVL), 360-380 (NWGVAIILLTIVIKILFWPLT), 424-444 (VNPMGGCLPMLLQIPVFFALY), 477-497 (IPYLGGLPVLTLLMGITMFIQ), and 512-532 (IMMIMPVMFTVFFVNFPSGLV).

This sequence belongs to the OXA1/ALB3/YidC family. Type 1 subfamily. In terms of assembly, interacts with the Sec translocase complex via SecD. Specifically interacts with transmembrane segments of nascent integral membrane proteins during membrane integration.

Its subcellular location is the cell inner membrane. Required for the insertion and/or proper folding and/or complex formation of integral membrane proteins into the membrane. Involved in integration of membrane proteins that insert both dependently and independently of the Sec translocase complex, as well as at least some lipoproteins. Aids folding of multispanning membrane proteins. This chain is Membrane protein insertase YidC, found in Syntrophobacter fumaroxidans (strain DSM 10017 / MPOB).